The primary structure comprises 541 residues: Chloride channel CLIC-like protein 1 (541 aa).

The N-terminal stretch at 1–18 (MLCSLLLCGCLLLITGYA) is a signal peptide. Topologically, residues 19 to 184 (HDDDWIDPTD…EDYFGVDPYN (166 aa)) are lumenal. The chain crosses the membrane as a helical span at residues 185–205 (VFMVLLCLLCIVALVATELWT). Topologically, residues 206–217 (YVRWHTQLKRVC) are cytoplasmic. Residues 218–238 (IISFLVSLGWNWIYLYKVAFA) traverse the membrane as a helical segment. The Lumenal portion of the chain corresponds to 239-329 (QHQANVAKMA…GEFIKALMKE (91 aa)). The helical transmembrane segment at 330 to 350 (IPVLLQIPVLVILALAVLGFC) threads the bilayer. At 351-541 (YGAGQSVPML…GTDPVSSPCG (191 aa)) the chain is on the cytoplasmic side. The disordered stretch occupies residues 362-381 (HFRGPEREPPRALEPDDRRR). Basic and acidic residues predominate over residues 364–381 (RGPEREPPRALEPDDRRR). Phosphoserine is present on residues S434 and S438. T482 carries the post-translational modification Phosphothreonine. Residue S504 is modified to Phosphoserine. Residues 511 to 522 (QLKTDSECRPHS) are compositionally biased toward basic and acidic residues. The segment at 511 to 541 (QLKTDSECRPHSTEAAAAAARGTDPVSSPCG) is disordered.

Belongs to the chloride channel MCLC family. As to quaternary structure, homomultimers. Interacts with mitochondrial protein PIGBOS1 (via C-terminus); the interaction occurs at the mitochondria-associated endoplasmic reticulum (ER) membrane, a zone of contact between the ER and mitochondrial membranes, but does not appear to play a role in ER-mitochondria tethering and is not affected by ER stress. Interacts with CALR. As to expression, expressed in testis (spermatocytes), liver and lung (at protein level). Expressed in spleen, liver, testis, kidney, heart, brain and lung.

The protein localises to the endoplasmic reticulum membrane. It catalyses the reaction chloride(in) = chloride(out). The enzyme catalyses bromide(in) = bromide(out). The catalysed reaction is nitrate(in) = nitrate(out). It carries out the reaction fluoride(in) = fluoride(out). In terms of biological role, anion-selective channel with Ca(2+)-dependent and voltage-independent gating. Permeable to small monovalent anions with selectivity for bromide &gt; chloride &gt; nitrate &gt; fluoride. Operates in the endoplasmic reticulum (ER) membrane where it mediates chloride efflux to compensate for the loss of positive charges from the ER lumen upon Ca(2+) release. Contributes to the maintenance of ER Ca(2+) pools and activation of unfolded protein response to prevent accumulation of misfolded proteins in the ER lumen. Particularly involved in ER homeostasis mechanisms underlying motor neurons and retinal photoreceptors survival. The sequence is that of Chloride channel CLIC-like protein 1 from Rattus norvegicus (Rat).